Consider the following 450-residue polypeptide: Signal recognition particle 54 kDa protein (450 aa).

GTP contacts are provided by residues 107–114 (GIQGSGKT), 188–192 (DTAGR), and 247–250 (TKLD).

Belongs to the GTP-binding SRP family. SRP54 subfamily. Part of the signal recognition particle protein translocation system, which is composed of SRP and FtsY. Archaeal SRP consists of a 7S RNA molecule of 300 nucleotides and two protein subunits: SRP54 and SRP19.

It localises to the cytoplasm. It carries out the reaction GTP + H2O = GDP + phosphate + H(+). Functionally, involved in targeting and insertion of nascent membrane proteins into the cytoplasmic membrane. Binds to the hydrophobic signal sequence of the ribosome-nascent chain (RNC) as it emerges from the ribosomes. The SRP-RNC complex is then targeted to the cytoplasmic membrane where it interacts with the SRP receptor FtsY. The protein is Signal recognition particle 54 kDa protein of Methanococcus vannielii (strain ATCC 35089 / DSM 1224 / JCM 13029 / OCM 148 / SB).